A 206-amino-acid chain; its full sequence is Na(+)-translocating NADH-quinone reductase subunit E (206 aa).

6 helical membrane-spanning segments follow: residues 12-32 (AVFVENMALAFFLGMCTFLAV), 36-56 (ISSAIGLGIAVVVVLTITVPV), 85-105 (FLGLLSYIGVIAALVQILEMF), 118-138 (GVFLPLITVNCAILGASLFMV), 148-168 (VIYGAGAGVGWALAITALAGI), and 184-204 (LGITFITVGLMSLGFMSFSGI).

The protein belongs to the NqrDE/RnfAE family. In terms of assembly, composed of six subunits; NqrA, NqrB, NqrC, NqrD, NqrE and NqrF.

The protein resides in the cell inner membrane. The enzyme catalyses a ubiquinone + n Na(+)(in) + NADH + H(+) = a ubiquinol + n Na(+)(out) + NAD(+). NQR complex catalyzes the reduction of ubiquinone-1 to ubiquinol by two successive reactions, coupled with the transport of Na(+) ions from the cytoplasm to the periplasm. NqrA to NqrE are probably involved in the second step, the conversion of ubisemiquinone to ubiquinol. The chain is Na(+)-translocating NADH-quinone reductase subunit E from Chromohalobacter salexigens (strain ATCC BAA-138 / DSM 3043 / CIP 106854 / NCIMB 13768 / 1H11).